The chain runs to 95 residues: Small ribosomal subunit protein uS19 (95 aa).

This sequence belongs to the universal ribosomal protein uS19 family.

Its function is as follows. Protein S19 forms a complex with S13 that binds strongly to the 16S ribosomal RNA. This Thermotoga sp. (strain RQ2) protein is Small ribosomal subunit protein uS19.